The following is a 319-amino-acid chain: Formimidoylglutamase (319 aa).

The Mn(2+) site is built by Asn127, Asp150, His152, Asp154, Asp242, and Asp244.

This sequence belongs to the arginase family. Mn(2+) is required as a cofactor.

It catalyses the reaction N-formimidoyl-L-glutamate + H2O = formamide + L-glutamate. It functions in the pathway amino-acid degradation; L-histidine degradation into L-glutamate; L-glutamate from N-formimidoyl-L-glutamate (hydrolase route): step 1/1. Catalyzes the conversion of N-formimidoyl-L-glutamate to L-glutamate and formamide. This Bacillus subtilis (strain 168) protein is Formimidoylglutamase.